We begin with the raw amino-acid sequence, 342 residues long: MSITPQEALTRCIEHREIFHDEMLHLMRQIMQGQISPVMAAAILTGLRVKKETIGEISAAAQVMREFANHVTVKDRENFVDIVGTGGDGSHTFNISTASMFVAAAAGAKIAKHGNRGVSSKSGSADVLEALGVNIMLTPEQVGECIEQTGIGFMFAPTHHPAMKNVAPIRKEMGVRTIFNILGPLTNPADAPNILMGVFHPDLVGIQVRVMQRLGAQHAIVVYGKDGMDEVSLGAATLVGELKDGEVREYEIHPEDFGLSMISNRGLKVADAVESKEMLLEALSDVPGTPREIVSLNAGTALYAANVASSIEDGIRRAREAIASGAAREKLDQFVRATQQFK.

5-phospho-alpha-D-ribose 1-diphosphate contacts are provided by residues Gly84, 87–88 (GD), Thr92, 94–97 (NIST), 112–120 (KHGNRGVSS), and Ser124. Anthranilate is bound at residue Gly84. Ser96 is a binding site for Mg(2+). An anthranilate-binding site is contributed by Asn115. Position 170 (Arg170) interacts with anthranilate. The Mg(2+) site is built by Asp229 and Glu230.

It belongs to the anthranilate phosphoribosyltransferase family. In terms of assembly, homodimer. Requires Mg(2+) as cofactor.

It catalyses the reaction N-(5-phospho-beta-D-ribosyl)anthranilate + diphosphate = 5-phospho-alpha-D-ribose 1-diphosphate + anthranilate. It functions in the pathway amino-acid biosynthesis; L-tryptophan biosynthesis; L-tryptophan from chorismate: step 2/5. Its function is as follows. Catalyzes the transfer of the phosphoribosyl group of 5-phosphorylribose-1-pyrophosphate (PRPP) to anthranilate to yield N-(5'-phosphoribosyl)-anthranilate (PRA). This is Anthranilate phosphoribosyltransferase from Cupriavidus metallidurans (strain ATCC 43123 / DSM 2839 / NBRC 102507 / CH34) (Ralstonia metallidurans).